A 338-amino-acid polypeptide reads, in one-letter code: D-erythrose-4-phosphate dehydrogenase (338 aa).

Position 12–13 (12–13) interacts with NAD(+); the sequence is RI. Substrate is bound by residues 154-156, Arg-200, 213-214, and Arg-236; these read SCT and TK. The active-site Nucleophile is Cys-155. Asn-318 contacts NAD(+).

The protein belongs to the glyceraldehyde-3-phosphate dehydrogenase family. Epd subfamily. Homotetramer.

The protein localises to the cytoplasm. It carries out the reaction D-erythrose 4-phosphate + NAD(+) + H2O = 4-phospho-D-erythronate + NADH + 2 H(+). Its pathway is cofactor biosynthesis; pyridoxine 5'-phosphate biosynthesis; pyridoxine 5'-phosphate from D-erythrose 4-phosphate: step 1/5. Functionally, catalyzes the NAD-dependent conversion of D-erythrose 4-phosphate to 4-phosphoerythronate. In Tolumonas auensis (strain DSM 9187 / NBRC 110442 / TA 4), this protein is D-erythrose-4-phosphate dehydrogenase.